A 305-amino-acid chain; its full sequence is NADH-cytochrome b5 reductase 1 (305 aa).

A helical membrane pass occupies residues 8–28; that stretch reads VLLASLGVGLLTLLGVALGAY. The 113-residue stretch at 44 to 156 folds into the FAD-binding FR-type domain; that stretch reads NEKYQLRLLD…RGPSGLLTYA (113 aa). FAD-binding positions include 136-166 and 175-210; these read DSLK…IQPN and VARN…QCFL.

It belongs to the flavoprotein pyridine nucleotide cytochrome reductase family. The cofactor is FAD.

Its subcellular location is the membrane. It catalyses the reaction 2 Fe(III)-[cytochrome b5] + NADH = 2 Fe(II)-[cytochrome b5] + NAD(+) + H(+). Its function is as follows. NADH-cytochrome b5 reductases are involved in desaturation and elongation of fatty acids, cholesterol biosynthesis, drug metabolism, and, in erythrocyte, methemoglobin reduction. The sequence is that of NADH-cytochrome b5 reductase 1 (CYB5R1) from Bos taurus (Bovine).